The chain runs to 451 residues: Interferon-related developmental regulator 1 (451 aa).

Residues M1–P10 show a composition bias toward basic residues. A disordered region spans residues M1–E69. Over residues A23–G33 the composition is skewed to low complexity. The span at E49–S61 shows a compositional bias: polar residues.

It belongs to the IFRD family. Interacts with PSIP1/LEDGF. Expressed in a variety of tissues.

Functionally, could play a role in regulating gene activity in the proliferative and/or differentiative pathways induced by NGF. May be an autocrine factor that attenuates or amplifies the initial ligand-induced signal. The polypeptide is Interferon-related developmental regulator 1 (IFRD1) (Homo sapiens (Human)).